The primary structure comprises 335 residues: DNA-directed RNA polymerase subunit alpha (335 aa).

The alpha N-terminal domain (alpha-NTD) stretch occupies residues 1–233 (MIRDEISVSI…DLFIPFLHGE (233 aa)). The interval 264-335 (KEKIAFQLIF…KLFAIDPPRN (72 aa)) is alpha C-terminal domain (alpha-CTD).

This sequence belongs to the RNA polymerase alpha chain family. As to quaternary structure, in plastids the minimal PEP RNA polymerase catalytic core is composed of four subunits: alpha, beta, beta', and beta''. When a (nuclear-encoded) sigma factor is associated with the core the holoenzyme is formed, which can initiate transcription.

It is found in the plastid. The protein resides in the chloroplast. It carries out the reaction RNA(n) + a ribonucleoside 5'-triphosphate = RNA(n+1) + diphosphate. DNA-dependent RNA polymerase catalyzes the transcription of DNA into RNA using the four ribonucleoside triphosphates as substrates. The sequence is that of DNA-directed RNA polymerase subunit alpha from Pinus thunbergii (Japanese black pine).